The sequence spans 467 residues: Putative vacuolar protein sorting-associated protein TDA6 (467 aa).

A helical transmembrane segment spans residues 8–28 (ILLWFLIVDLSVIRALVLPPL). Asparagine 61, asparagine 124, and asparagine 141 each carry an N-linked (GlcNAc...) asparagine glycan.

The protein belongs to the VPS62 family.

It is found in the membrane. Functionally, involved in vacuolar protein sorting. The polypeptide is Putative vacuolar protein sorting-associated protein TDA6 (TDA6) (Saccharomyces cerevisiae (strain ATCC 204508 / S288c) (Baker's yeast)).